A 795-amino-acid chain; its full sequence is Glutamine--tRNA ligase, cytoplasmic (795 aa).

The disordered stretch occupies residues 188-220 (ADNEKPTKKKEKKEKPAKVEEKKAVVETTAEPS). Residues 200 to 212 (KEKPAKVEEKKAV) show a composition bias toward basic and acidic residues. The short motif at 277-287 (PEPNGYLHIGH) is the 'HIGH' region element. ATP contacts are provided by residues 278–280 (EPN) and 284–290 (HIGHAKA). L-glutamine is bound by residues aspartate 310 and tyrosine 450. ATP-binding positions include threonine 469, 498-499 (RL), and 506-508 (MSK). The 'KMSKS' region signature appears at 505 to 509 (VMSKR).

This sequence belongs to the class-I aminoacyl-tRNA synthetase family.

It localises to the cytoplasm. The protein localises to the cytosol. It catalyses the reaction tRNA(Gln) + L-glutamine + ATP = L-glutaminyl-tRNA(Gln) + AMP + diphosphate. In Arabidopsis thaliana (Mouse-ear cress), this protein is Glutamine--tRNA ligase, cytoplasmic.